Here is a 550-residue protein sequence, read N- to C-terminus: Transcription factor p65 (550 aa).

At M1 the chain carries N-acetylmethionine. One can recognise an RHD domain in the interval 16-190 (ASGPYVEIIE…HPIFDNRAPN (175 aa)). Residue K37 forms a Glycyl lysine isopeptide (Lys-Gly) (interchain with G-Cter in SUMO3) linkage. C38 bears the Cysteine persulfide; alternate mark. S-nitrosocysteine; alternate is present on C38. 4 positions are modified to N6-acetyllysine: K122, K123, K218, and K221. Glycyl lysine isopeptide (Lys-Gly) (interchain with G-Cter in SUMO3); alternate cross-links involve residues K122 and K123. T254 bears the Phosphothreonine mark. Phosphoserine is present on residues S276 and S281. The short motif at 301 to 304 (KRKR) is the Nuclear localization signal element. K310 bears the N6-acetyllysine; alternate mark. N6-methyllysine is present on K310. Position 311 is a phosphoserine (S311). 2 transcriptional activation domain regions span residues 342–388 (PKPA…APVL) and 414–476 (PGPP…EFQQ). T434 carries the post-translational modification Phosphothreonine. S468 bears the Phosphoserine mark. T505 carries the post-translational modification Phosphothreonine. A transcriptional activation domain 2 region spans residues 520-550 (TSGLPNGLSGDEDFSSIADMDFSALLSQISS). S535 is modified (phosphoserine). Residues 535 to 543 (SIADMDFSA) carry the 9aaTAD motif.

As to quaternary structure, component of the NF-kappa-B p65-p50 complex. Component of the NF-kappa-B p65-c-Rel complex. Homodimer; component of the NF-kappa-B p65-p65 complex. Component of the NF-kappa-B p65-p52 complex. May interact with ETHE1. Binds TLE5 and TLE1. Interacts with TP53BP2. Binds to and is phosphorylated by the activated form of either RPS6KA4 or RPS6KA5. Interacts with ING4 and this interaction may be indirect. Interacts with CARM1, USP48 and UNC5CL. Interacts with IRAK1BP1. Interacts with NFKBID. Interacts with NFKBIA. Interacts with GSK3B. Interacts with NFKBIB. Interacts with NFKBIE. Interacts with NFKBIZ. Interacts with EHMT1 (via ANK repeats). Part of a 70-90 kDa complex at least consisting of CHUK, IKBKB, NFKBIA, RELA, ELP1 and MAP3K14. Interacts with HDAC3; HDAC3 mediates the deacetylation of RELA. Interacts with HDAC1; the interaction requires non-phosphorylated RELA. Interacts with CBP; the interaction requires phosphorylated RELA. Interacts (phosphorylated at 'Thr-254') with PIN1; the interaction inhibits p65 binding to NFKBIA. Interacts with SOCS1. Interacts with UXT. Interacts with MTDH and PHF11. Interacts with ARRB2. Interacts with NFKBIA (when phosphorylated), the interaction is direct; phosphorylated NFKBIA is part of a SCF(BTRC)-like complex lacking CUL1. Interacts with RNF25. Interacts (via C-terminus) with DDX1. Interacts with UFL1 and COMMD1. Interacts with BRMS1; this promotes deacetylation of 'Lys-310'. Interacts with NOTCH2. Directly interacts with MEN1; this interaction represses NFKB-mediated transactivation. Interacts with AKIP1, which promotes the phosphorylation and nuclear retention of RELA. Interacts (via the RHD) with GFI1; the interaction, after bacterial lipopolysaccharide (LPS) stimulation, inhibits the transcriptional activity by interfering with the DNA-binding activity to target gene promoter DNA. Interacts (when acetylated at Lys-310) with BRD4; leading to activation of the NF-kappa-B pathway. Interacts with MEFV. Interacts with CLOCK. Interacts (via N-terminus) with CPEN1; this interaction induces proteolytic cleavage of p65/RELA subunit and inhibition of NF-kappa-B transcriptional activity. Interacts with FOXP3. Interacts with CDK5RAP3; stimulates the interaction of RELA with HDAC1, HDAC2 and HDAC3 thereby inhibiting NF-kappa-B transcriptional activity. Interacts with DHX9; this interaction is direct and activates NF-kappa-B-mediated transcription. Interacts with LRRC25. Interacts with TBX21. Interacts with KAT2A. Interacts with ZBTB7A; involved in the control by RELA of the accessibility of target gene promoters. Directly interacts with DDX3X; this interaction may trap RELA in the cytoplasm, impairing nuclear relocalization upon TNF activating signals. Interacts with PHF2. Interacts with MKRN2; the interaction leads to its polyubiquitination and proteasome-dependent degradation. Interacts with ECSIT. Interacts with RAB28; the interaction contributes to RELA transport from cytoplasm to nucleus. In terms of processing, ubiquitinated by RNF182, leading to its proteasomal degradation. Degradation is required for termination of NF-kappa-B response. Polyubiquitinated via 'Lys-29'-linked ubiquitin; leading to lysosomal degradation. Monomethylated at Lys-310 by SETD6. Monomethylation at Lys-310 is recognized by the ANK repeats of EHMT1 and promotes the formation of repressed chromatin at target genes, leading to down-regulation of NF-kappa-B transcription factor activity. Phosphorylation at Ser-311 disrupts the interaction with EHMT1 without preventing monomethylation at Lys-310 and relieves the repression of target genes. Post-translationally, phosphorylation at Ser-311 disrupts the interaction with EHMT1 and promotes transcription factor activity. Phosphorylation on Ser-535 stimulates acetylation on Lys-310 and interaction with CBP; the phosphorylated and acetylated forms show enhanced transcriptional activity. Phosphorylation at Ser-276 by RPS6KA4 and RPS6KA5 promotes its transactivation and transcriptional activities. In terms of processing, phosphorylation at Ser-75 by herpes simplex virus 1/HHV-1 inhibits NF-kappa-B activation. Reversibly acetylated; the acetylation seems to be mediated by CBP, the deacetylation by HDAC3 and SIRT2. Acetylation at Lys-122 enhances DNA binding and impairs association with NFKBIA. Acetylation at Lys-310 is required for full transcriptional activity in the absence of effects on DNA binding and NFKBIA association. Acetylation at Lys-310 promotes interaction with BRD4. Acetylation can also lower DNA-binding and results in nuclear export. Interaction with BRMS1 promotes deacetylation of Lys-310. Lys-310 is deacetylated by SIRT2. Post-translationally, S-nitrosylation of Cys-38 inactivates the enzyme activity. In terms of processing, sulfhydration at Cys-38 mediates the anti-apoptotic activity by promoting the interaction with RPS3 and activating the transcription factor activity. Sumoylation by PIAS3 negatively regulates DNA-bound activated NF-kappa-B. Post-translationally, proteolytically cleaved within a conserved N-terminus region required for base-specific contact with DNA in a CPEN1-mediated manner, and hence inhibits NF-kappa-B transcriptional activity.

The protein localises to the nucleus. Its subcellular location is the cytoplasm. In terms of biological role, NF-kappa-B is a pleiotropic transcription factor present in almost all cell types and is the endpoint of a series of signal transduction events that are initiated by a vast array of stimuli related to many biological processes such as inflammation, immunity, differentiation, cell growth, tumorigenesis and apoptosis. NF-kappa-B is a homo- or heterodimeric complex formed by the Rel-like domain-containing proteins RELA/p65, RELB, NFKB1/p105, NFKB1/p50, REL and NFKB2/p52. The heterodimeric RELA-NFKB1 complex appears to be most abundant one. The dimers bind at kappa-B sites in the DNA of their target genes and the individual dimers have distinct preferences for different kappa-B sites that they can bind with distinguishable affinity and specificity. Different dimer combinations act as transcriptional activators or repressors, respectively. The NF-kappa-B heterodimeric RELA-NFKB1 and RELA-REL complexes, for instance, function as transcriptional activators. NF-kappa-B is controlled by various mechanisms of post-translational modification and subcellular compartmentalization as well as by interactions with other cofactors or corepressors. NF-kappa-B complexes are held in the cytoplasm in an inactive state complexed with members of the NF-kappa-B inhibitor (I-kappa-B) family. In a conventional activation pathway, I-kappa-B is phosphorylated by I-kappa-B kinases (IKKs) in response to different activators, subsequently degraded thus liberating the active NF-kappa-B complex which translocates to the nucleus. The inhibitory effect of I-kappa-B on NF-kappa-B through retention in the cytoplasm is exerted primarily through the interaction with RELA. RELA shows a weak DNA-binding site which could contribute directly to DNA binding in the NF-kappa-B complex. Besides its activity as a direct transcriptional activator, it is also able to modulate promoters accessibility to transcription factors and thereby indirectly regulate gene expression. Associates with chromatin at the NF-kappa-B promoter region via association with DDX1. Essential for cytokine gene expression in T-cells. The NF-kappa-B homodimeric RELA-RELA complex appears to be involved in invasin-mediated activation of IL-8 expression. Key transcription factor regulating the IFN response during SARS-CoV-2 infection. The polypeptide is Transcription factor p65 (Rattus norvegicus (Rat)).